The sequence spans 209 residues: Protein-L-isoaspartate O-methyltransferase (209 aa).

Ser59 is a catalytic residue.

Belongs to the methyltransferase superfamily. L-isoaspartyl/D-aspartyl protein methyltransferase family. As to quaternary structure, monomer.

Its subcellular location is the cytoplasm. The catalysed reaction is [protein]-L-isoaspartate + S-adenosyl-L-methionine = [protein]-L-isoaspartate alpha-methyl ester + S-adenosyl-L-homocysteine. Its function is as follows. Catalyzes the methyl esterification of L-isoaspartyl residues in peptides and proteins that result from spontaneous decomposition of normal L-aspartyl and L-asparaginyl residues. It plays a role in the repair and/or degradation of damaged proteins. This Helicobacter pylori (strain J99 / ATCC 700824) (Campylobacter pylori J99) protein is Protein-L-isoaspartate O-methyltransferase (pcm).